The chain runs to 62 residues: uncharacterized protein (62 aa).

The tract at residues 1-62 (MSSTAEEMAA…SNGEAKRKEK (62 aa)) is disordered. Residues 28-37 (TKSDRVEHKH) are compositionally biased toward basic and acidic residues.

This is an uncharacterized protein from Caenorhabditis elegans.